A 353-amino-acid chain; its full sequence is RNA 3'-terminal phosphate cyclase (353 aa).

Residues Gln-100 and 289 to 292 (HMSD) each bind ATP. The active-site Tele-AMP-histidine intermediate is the His-315.

It belongs to the RNA 3'-terminal cyclase family. Type 1 subfamily.

The protein localises to the cytoplasm. It carries out the reaction a 3'-end 3'-phospho-ribonucleotide-RNA + ATP = a 3'-end 2',3'-cyclophospho-ribonucleotide-RNA + AMP + diphosphate. Its function is as follows. Catalyzes the conversion of 3'-phosphate to a 2',3'-cyclic phosphodiester at the end of RNA. The mechanism of action of the enzyme occurs in 3 steps: (A) adenylation of the enzyme by ATP; (B) transfer of adenylate to an RNA-N3'P to produce RNA-N3'PP5'A; (C) and attack of the adjacent 2'-hydroxyl on the 3'-phosphorus in the diester linkage to produce the cyclic end product. The biological role of this enzyme is unknown but it is likely to function in some aspects of cellular RNA processing. The protein is RNA 3'-terminal phosphate cyclase of Ignicoccus hospitalis (strain KIN4/I / DSM 18386 / JCM 14125).